The chain runs to 429 residues: Glutamate-1-semialdehyde 2,1-aminomutase 2 (429 aa).

Lysine 267 is modified (N6-(pyridoxal phosphate)lysine).

It belongs to the class-III pyridoxal-phosphate-dependent aminotransferase family. HemL subfamily. Homodimer. Requires pyridoxal 5'-phosphate as cofactor.

The protein localises to the cytoplasm. It carries out the reaction (S)-4-amino-5-oxopentanoate = 5-aminolevulinate. The protein operates within porphyrin-containing compound metabolism; protoporphyrin-IX biosynthesis; 5-aminolevulinate from L-glutamyl-tRNA(Glu): step 2/2. In Bacillus subtilis (strain 168), this protein is Glutamate-1-semialdehyde 2,1-aminomutase 2 (gsaB).